The following is a 186-amino-acid chain: Elongation factor P (186 aa).

The protein belongs to the elongation factor P family.

It is found in the cytoplasm. The protein operates within protein biosynthesis; polypeptide chain elongation. Functionally, involved in peptide bond synthesis. Stimulates efficient translation and peptide-bond synthesis on native or reconstituted 70S ribosomes in vitro. Probably functions indirectly by altering the affinity of the ribosome for aminoacyl-tRNA, thus increasing their reactivity as acceptors for peptidyl transferase. This Mycoplasmopsis synoviae (strain 53) (Mycoplasma synoviae) protein is Elongation factor P.